A 166-amino-acid chain; its full sequence is UPF0304 protein VFMJ11_1926 (166 aa).

The protein belongs to the UPF0304 family.

The sequence is that of UPF0304 protein VFMJ11_1926 from Aliivibrio fischeri (strain MJ11) (Vibrio fischeri).